We begin with the raw amino-acid sequence, 702 residues long: Elongation factor G 2 (702 aa).

Residues 8-291 (ELYRNIGIVA…AVIDYLPAPS (284 aa)) form the tr-type G domain. GTP-binding positions include 17 to 24 (AHVDAGKT), 89 to 93 (DTPGH), and 143 to 146 (NKMD). The tract at residues 293–314 (IPAIRGTDPDDEEKHDERHADD) is disordered.

It belongs to the TRAFAC class translation factor GTPase superfamily. Classic translation factor GTPase family. EF-G/EF-2 subfamily.

It is found in the cytoplasm. In terms of biological role, catalyzes the GTP-dependent ribosomal translocation step during translation elongation. During this step, the ribosome changes from the pre-translocational (PRE) to the post-translocational (POST) state as the newly formed A-site-bound peptidyl-tRNA and P-site-bound deacylated tRNA move to the P and E sites, respectively. Catalyzes the coordinated movement of the two tRNA molecules, the mRNA and conformational changes in the ribosome. This Pseudomonas aeruginosa (strain ATCC 15692 / DSM 22644 / CIP 104116 / JCM 14847 / LMG 12228 / 1C / PRS 101 / PAO1) protein is Elongation factor G 2 (fusB).